We begin with the raw amino-acid sequence, 366 residues long: UDP-N-acetylglucosamine--N-acetylmuramyl-(pentapeptide) pyrophosphoryl-undecaprenol N-acetylglucosamine transferase (366 aa).

UDP-N-acetyl-alpha-D-glucosamine contacts are provided by residues 14–16 (TGG), N125, R168, S196, and Q297.

This sequence belongs to the glycosyltransferase 28 family. MurG subfamily.

It localises to the cell inner membrane. It carries out the reaction di-trans,octa-cis-undecaprenyl diphospho-N-acetyl-alpha-D-muramoyl-L-alanyl-D-glutamyl-meso-2,6-diaminopimeloyl-D-alanyl-D-alanine + UDP-N-acetyl-alpha-D-glucosamine = di-trans,octa-cis-undecaprenyl diphospho-[N-acetyl-alpha-D-glucosaminyl-(1-&gt;4)]-N-acetyl-alpha-D-muramoyl-L-alanyl-D-glutamyl-meso-2,6-diaminopimeloyl-D-alanyl-D-alanine + UDP + H(+). The protein operates within cell wall biogenesis; peptidoglycan biosynthesis. Its function is as follows. Cell wall formation. Catalyzes the transfer of a GlcNAc subunit on undecaprenyl-pyrophosphoryl-MurNAc-pentapeptide (lipid intermediate I) to form undecaprenyl-pyrophosphoryl-MurNAc-(pentapeptide)GlcNAc (lipid intermediate II). This chain is UDP-N-acetylglucosamine--N-acetylmuramyl-(pentapeptide) pyrophosphoryl-undecaprenol N-acetylglucosamine transferase, found in Rhodopseudomonas palustris (strain BisB5).